The sequence spans 545 residues: Probable bifunctional tRNA threonylcarbamoyladenosine biosynthesis protein (545 aa).

Residues 1–329 (MKNTFILGIE…YRTDDVKVTW (329 aa)) are kae1. The Fe cation site is built by His113, His117, and Tyr134. L-threonylcarbamoyladenylate-binding positions include 134-138 (YVSGA), Asp166, Gly179, Glu183, and Asn262. Asp290 contacts Fe cation. In terms of domain architecture, Protein kinase spans 340-545 (EISPGTSLKL…EEIKKRARYA (206 aa)). Residues 353–361 (LDNGAEAIV) and Lys375 each bind ATP. Residue Asp462 is the Proton acceptor; for kinase activity of the active site.

This sequence in the N-terminal section; belongs to the KAE1 / TsaD family. In the C-terminal section; belongs to the protein kinase superfamily. Tyr protein kinase family. BUD32 subfamily. As to quaternary structure, component of the KEOPS complex that consists of Kae1, Bud32, Cgi121 and Pcc1; the whole complex dimerizes. The cofactor is Fe(2+).

It is found in the cytoplasm. It carries out the reaction L-seryl-[protein] + ATP = O-phospho-L-seryl-[protein] + ADP + H(+). The catalysed reaction is L-threonyl-[protein] + ATP = O-phospho-L-threonyl-[protein] + ADP + H(+). The enzyme catalyses L-threonylcarbamoyladenylate + adenosine(37) in tRNA = N(6)-L-threonylcarbamoyladenosine(37) in tRNA + AMP + H(+). Its function is as follows. Required for the formation of a threonylcarbamoyl group on adenosine at position 37 (t(6)A37) in tRNAs that read codons beginning with adenine. Is a component of the KEOPS complex that is probably involved in the transfer of the threonylcarbamoyl moiety of threonylcarbamoyl-AMP (TC-AMP) to the N6 group of A37. The Kae1 domain likely plays a direct catalytic role in this reaction. The Bud32 domain probably displays kinase activity that regulates Kae1 function. In Methanosarcina barkeri (strain Fusaro / DSM 804), this protein is Probable bifunctional tRNA threonylcarbamoyladenosine biosynthesis protein.